Here is a 94-residue protein sequence, read N- to C-terminus: Large ribosomal subunit protein bL25 (94 aa).

This sequence belongs to the bacterial ribosomal protein bL25 family. Part of the 50S ribosomal subunit; part of the 5S rRNA/L5/L18/L25 subcomplex. Contacts the 5S rRNA. Binds to the 5S rRNA independently of L5 and L18.

Its function is as follows. This is one of the proteins that binds to the 5S RNA in the ribosome where it forms part of the central protuberance. This is Large ribosomal subunit protein bL25 from Salmonella agona (strain SL483).